The chain runs to 288 residues: MQGPGGNVSRGLPGGPASTVASGAGRCESGALMHSFGIFLQGLLGVVAFSTLMLKRFREPKHERRPWRIWFLDTSKQAIGMLFIHFANVYLADLTEEDPCSLYLINFLLDATVGMLLIYVGVRAVGVLVEWQQWESLRFGEYGDPLQCGAWVGQCALYIVIMIFEKSVVFIVLLILQWKKVALLNPIENPDLKLAIVMLIVPFFVNAFMFWVVDNFLMRKGKTKAKLEERGANQDSRNGSKVRYRRAASHEESESEILISADDEMEESDAEEDLRRPVKKKHRFGLPV.

The Cytoplasmic portion of the chain corresponds to 1–28 (MQGPGGNVSRGLPGGPASTVASGAGRCE). Transmembrane regions (helical) follow at residues 29–49 (SGALMHSFGIFLQGLLGVVAF), 69–89 (IWFLDTSKQAIGMLFIHFANV), and 102–122 (LYLINFLLDATVGMLLIYVGV). Residues 149–153 (GAWVG) carry the GXXXG motif motif. Transmembrane regions (helical) follow at residues 156 to 176 (ALYIVIMIFEKSVVFIVLLIL) and 194 to 214 (LAIVMLIVPFFVNAFMFWVVD). Residues 215 to 288 (NFLMRKGKTK…KKKHRFGLPV (74 aa)) are Cytoplasmic-facing. The disordered stretch occupies residues 228–288 (EERGANQDSR…KKKHRFGLPV (61 aa)). The required for localization in the endoplasmic reticulum stretch occupies residues 241–246 (KVRYRR). A compositionally biased stretch (acidic residues) spans 261 to 272 (ADDEMEESDAEE). Over residues 277-288 (PVKKKHRFGLPV) the composition is skewed to basic residues.

It belongs to the STIMATE family. Homooligomer. Interacts with STIM1.

It is found in the endoplasmic reticulum membrane. Its function is as follows. Acts as a regulator of store-operated Ca(2+) entry (SOCE) at junctional sites that connect the endoplasmic reticulum (ER) and plasma membrane (PM), called ER-plasma membrane (ER-PM) junction or cortical ER. SOCE is a Ca(2+) influx following depletion of intracellular Ca(2+) stores. Acts by interacting with STIM1, promoting STIM1 conformational switch. Involved in STIM1 relocalization to ER-PM junctions. Contributes to the maintenance and reorganization of store-dependent ER-PM junctions. The sequence is that of Store-operated calcium entry regulator STIMATE from Rattus norvegicus (Rat).